Reading from the N-terminus, the 31-residue chain is Photosystem II reaction center protein T (31 aa).

The chain crosses the membrane as a helical span at residues 3–23 (ALVYVFLLVGTLMVIFFAIFF).

It belongs to the PsbT family. As to quaternary structure, PSII is composed of 1 copy each of membrane proteins PsbA, PsbB, PsbC, PsbD, PsbE, PsbF, PsbH, PsbI, PsbJ, PsbK, PsbL, PsbM, PsbT, PsbX, PsbY, PsbZ, Psb30/Ycf12, at least 3 peripheral proteins of the oxygen-evolving complex and a large number of cofactors. It forms dimeric complexes.

It localises to the plastid. The protein resides in the chloroplast thylakoid membrane. In terms of biological role, found at the monomer-monomer interface of the photosystem II (PS II) dimer, plays a role in assembly and dimerization of PSII. PSII is a light-driven water plastoquinone oxidoreductase, using light energy to abstract electrons from H(2)O, generating a proton gradient subsequently used for ATP formation. This chain is Photosystem II reaction center protein T, found in Gracilaria tenuistipitata var. liui (Red alga).